A 412-amino-acid polypeptide reads, in one-letter code: Histidine--tRNA ligase (412 aa).

The protein belongs to the class-II aminoacyl-tRNA synthetase family. Homodimer.

It localises to the cytoplasm. The catalysed reaction is tRNA(His) + L-histidine + ATP = L-histidyl-tRNA(His) + AMP + diphosphate + H(+). The polypeptide is Histidine--tRNA ligase (Rickettsia typhi (strain ATCC VR-144 / Wilmington)).